A 277-amino-acid polypeptide reads, in one-letter code: Shikimate dehydrogenase (NADP(+)) (277 aa).

Shikimate-binding positions include 19–21 (SKS) and Thr-66. The active-site Proton acceptor is the Lys-70. Asp-82 is an NADP(+) binding site. Positions 91 and 107 each coordinate shikimate. NADP(+) contacts are provided by residues 133-137 (GAGGA), 157-162 (NRTRAR), and Leu-222. Tyr-224 is a shikimate binding site. Residue Gly-245 coordinates NADP(+).

The protein belongs to the shikimate dehydrogenase family. Homodimer.

It catalyses the reaction shikimate + NADP(+) = 3-dehydroshikimate + NADPH + H(+). Its pathway is metabolic intermediate biosynthesis; chorismate biosynthesis; chorismate from D-erythrose 4-phosphate and phosphoenolpyruvate: step 4/7. Functionally, involved in the biosynthesis of the chorismate, which leads to the biosynthesis of aromatic amino acids. Catalyzes the reversible NADPH linked reduction of 3-dehydroshikimate (DHSA) to yield shikimate (SA). The protein is Shikimate dehydrogenase (NADP(+)) of Roseobacter denitrificans (strain ATCC 33942 / OCh 114) (Erythrobacter sp. (strain OCh 114)).